The following is an 88-amino-acid chain: Eclosion hormone (88 aa).

The first 26 residues, 1-26 (MANKLTAVIVVALAVAFMVNLDYANC), serve as a signal peptide directing secretion. 3 cysteine pairs are disulfide-bonded: Cys-40–Cys-64, Cys-44–Cys-60, and Cys-47–Cys-75.

Belongs to the insect eclosion hormone family.

It localises to the secreted. Neuropeptide that triggers the performance of ecdysis behaviors at the end of a molt. It triggers adult behavior patterns: larval, pupal and adult ecdysis, and plasticization during the molt. This is Eclosion hormone from Bombyx mori (Silk moth).